The following is a 299-amino-acid chain: Tyrosine recombinase XerC (299 aa).

The 81-residue stretch at 1–81 (MDEAIRRFIE…SWRQFYHWLQ (81 aa)) folds into the Core-binding (CB) domain. The Tyr recombinase domain occupies 102–281 (LLPKALPVDG…DFQHLAKVYD (180 aa)). Active-site residues include Arg-142, Lys-166, His-233, Arg-236, and His-259. Tyr-268 serves as the catalytic O-(3'-phospho-DNA)-tyrosine intermediate.

This sequence belongs to the 'phage' integrase family. XerC subfamily. As to quaternary structure, forms a cyclic heterotetrameric complex composed of two molecules of XerC and two molecules of XerD.

The protein resides in the cytoplasm. Functionally, site-specific tyrosine recombinase, which acts by catalyzing the cutting and rejoining of the recombining DNA molecules. The XerC-XerD complex is essential to convert dimers of the bacterial chromosome into monomers to permit their segregation at cell division. It also contributes to the segregational stability of plasmids. The protein is Tyrosine recombinase XerC of Chromobacterium violaceum (strain ATCC 12472 / DSM 30191 / JCM 1249 / CCUG 213 / NBRC 12614 / NCIMB 9131 / NCTC 9757 / MK).